Consider the following 529-residue polypeptide: Phospholipase A1-Igamma2, chloroplastic (529 aa).

The transit peptide at methionine 1 to arginine 43 directs the protein to the chloroplast. The short motif at glycine 316–glycine 320 is the GXSXG element. Serine 318 serves as the catalytic Acyl-ester intermediate. Catalysis depends on charge relay system residues aspartate 381 and histidine 437.

It belongs to the AB hydrolase superfamily. Lipase family. Interacts with SBP1. As to expression, widely expressed. Highly expressed in leaves and stems.

The protein localises to the plastid. Its subcellular location is the chloroplast. It catalyses the reaction 1,2-dihexadecanoyl-sn-glycero-3-phosphocholine + H2O = 2-hexadecanoyl-sn-glycero-3-phosphocholine + hexadecanoate + H(+). The catalysed reaction is a 1,2-diacyl-3-O-(beta-D-galactosyl)-sn-glycerol + H2O = an acyl-3-O-(beta-D-galactosyl)-sn-glycerol + a fatty acid + H(+). It carries out the reaction a 1,2-diacyl-3-O-[alpha-D-galactosyl-(1-&gt;6)-beta-D-galactosyl]-sn-glycerol + H2O = acyl-3-O-[alpha-D-galactosyl-(1-&gt;6)-beta-D-galactosyl]-sn-glycerol + a fatty acid + H(+). The enzyme catalyses a triacylglycerol + H2O = a diacylglycerol + a fatty acid + H(+). Its function is as follows. Acylhydrolase with broad specificity. Catalyzes the hydrolysis of phosphatidylcholine at the sn-1 position. Possesses moderate activity toward phosphatidylcholine (PC), monogalactosyldiacylglycerol (MGDG), digalactosyldiacylglycerol (DGDG) and triacylglycerol (TAG). This chain is Phospholipase A1-Igamma2, chloroplastic, found in Arabidopsis thaliana (Mouse-ear cress).